A 427-amino-acid chain; its full sequence is Septin-8 (427 aa).

The region spanning 39 to 305 (QGFCFNILCV…ELYRRCKLEE (267 aa)) is the Septin-type G domain. The G1 motif stretch occupies residues 49–56 (GETGIGKS). Residues 49–56 (GETGIGKS), Gly-104, 185–193 (KADTISKSE), Gly-239, and Arg-254 contribute to the GTP site. Residues 101–104 (DTVG) form a G3 motif region. The segment at 184 to 187 (AKAD) is G4 motif. Residues 321 to 409 (QETYEAKRKE…KAAMEALQSQ (89 aa)) adopt a coiled-coil conformation. The interval 373-427 (RVHQEESKKVEDKRRDLEEEMNSFNRRKAAMEALQSQSFQATSQQPLKKDKDRKN) is disordered. The segment covering 374-389 (VHQEESKKVEDKRRDL) has biased composition (basic and acidic residues). A compositionally biased stretch (polar residues) spans 406–418 (LQSQSFQATSQQP).

Belongs to the TRAFAC class TrmE-Era-EngA-EngB-Septin-like GTPase superfamily. Septin GTPase family.

Its subcellular location is the cytoplasm. The protein localises to the cytoskeleton. It localises to the synapse. The protein resides in the cell projection. It is found in the axon. Its subcellular location is the cytoplasmic vesicle. The protein localises to the secretory vesicle. It localises to the synaptic vesicle membrane. The protein resides in the presynapse. The sequence is that of Septin-8 from Xenopus tropicalis (Western clawed frog).